A 249-amino-acid polypeptide reads, in one-letter code: 2,3-bisphosphoglycerate-dependent phosphoglycerate mutase (249 aa).

Substrate contacts are provided by residues 8 to 15, 21 to 22, Arg-60, 87 to 90, Lys-98, 114 to 115, and 183 to 184; these read RHGQSAWN, TG, ERHY, RR, and GN. Residue His-9 is the Tele-phosphohistidine intermediate of the active site. The Proton donor/acceptor role is filled by Glu-87. Residues 115–137 are disordered; that stretch reads RSYDTPPPPLPADDPRSPAGDAR.

The protein belongs to the phosphoglycerate mutase family. BPG-dependent PGAM subfamily. In terms of assembly, homodimer.

It carries out the reaction (2R)-2-phosphoglycerate = (2R)-3-phosphoglycerate. It participates in carbohydrate degradation; glycolysis; pyruvate from D-glyceraldehyde 3-phosphate: step 3/5. Functionally, catalyzes the interconversion of 2-phosphoglycerate and 3-phosphoglycerate. This is 2,3-bisphosphoglycerate-dependent phosphoglycerate mutase from Nitratidesulfovibrio vulgaris (strain DSM 19637 / Miyazaki F) (Desulfovibrio vulgaris).